The chain runs to 518 residues: Homoserine O-acetyltransferase (518 aa).

Residues Asn-69–Leu-468 form the AB hydrolase-1 domain. Ser-182 is a catalytic residue. Ser-182 functions as the Nucleophile in the catalytic mechanism. The disordered stretch occupies residues Arg-267–Pro-365. A compositionally biased stretch (basic and acidic residues) spans Pro-290–Arg-303. Residues Arg-310–Pro-341 are compositionally biased toward low complexity. Residues Asp-435 and His-464 contribute to the active site.

Belongs to the AB hydrolase superfamily. MetX family.

It catalyses the reaction L-homoserine + acetyl-CoA = O-acetyl-L-homoserine + CoA. It functions in the pathway amino-acid biosynthesis; L-methionine biosynthesis via de novo pathway; O-acetyl-L-homoserine from L-homoserine: step 1/1. Its function is as follows. Commits homoserine to the methionine biosynthesis pathway by catalyzing its O-acetylation. The chain is Homoserine O-acetyltransferase (MET2) from Ascobolus immersus.